The primary structure comprises 223 residues: Ubiquitin carboxyl-terminal hydrolase isozyme L1 (223 aa).

The residue at position 1 (methionine 1) is an N-acetylmethionine. One can recognise a UCH catalytic domain in the interval 2–221 (QLKPMEINPE…VRFSAVALCK (220 aa)). The interval 5–10 (PMEINP) is interaction with ubiquitin. Catalysis depends on cysteine 90, which acts as the Nucleophile. Phosphoserine is present on serine 125. Residue histidine 161 is the Proton donor of the active site. The tract at residues 211–216 (EVRFSA) is interaction with ubiquitin. Cysteine 220 carries S-farnesyl cysteine lipidation. Residues 221–223 (KAA) constitute a propeptide, removed in mature form.

This sequence belongs to the peptidase C12 family. In terms of assembly, monomer. Homodimer. Interacts with COPS5 and SNCA. O-glycosylated.

Its subcellular location is the cytoplasm. The protein localises to the endoplasmic reticulum membrane. It carries out the reaction Thiol-dependent hydrolysis of ester, thioester, amide, peptide and isopeptide bonds formed by the C-terminal Gly of ubiquitin (a 76-residue protein attached to proteins as an intracellular targeting signal).. In terms of biological role, ubiquitin-protein hydrolase involved both in the processing of ubiquitin precursors and of ubiquitinated proteins. This enzyme is a thiol protease that recognizes and hydrolyzes a peptide bond at the C-terminal glycine of ubiquitin. Also binds to free monoubiquitin and may prevent its degradation in lysosomes. The homodimer may have ATP-independent ubiquitin ligase activity. The protein is Ubiquitin carboxyl-terminal hydrolase isozyme L1 (UCHL1) of Sus scrofa (Pig).